The sequence spans 356 residues: 3-dehydroquinate synthase (356 aa).

NAD(+) is bound by residues glutamate 71–lysine 76, glycine 105–aspartate 109, threonine 129–serine 130, lysine 142, and lysine 151. 3 residues coordinate Zn(2+): glutamate 184, histidine 247, and histidine 264.

The protein belongs to the sugar phosphate cyclases superfamily. Dehydroquinate synthase family. Co(2+) is required as a cofactor. Requires Zn(2+) as cofactor. The cofactor is NAD(+).

The protein localises to the cytoplasm. The catalysed reaction is 7-phospho-2-dehydro-3-deoxy-D-arabino-heptonate = 3-dehydroquinate + phosphate. It participates in metabolic intermediate biosynthesis; chorismate biosynthesis; chorismate from D-erythrose 4-phosphate and phosphoenolpyruvate: step 2/7. Its function is as follows. Catalyzes the conversion of 3-deoxy-D-arabino-heptulosonate 7-phosphate (DAHP) to dehydroquinate (DHQ). This chain is 3-dehydroquinate synthase, found in Lactococcus lactis subsp. cremoris (strain SK11).